A 124-amino-acid chain; its full sequence is Large ribosomal subunit protein uL22 (124 aa).

Belongs to the universal ribosomal protein uL22 family. As to quaternary structure, part of the 50S ribosomal subunit.

Functionally, this protein binds specifically to 23S rRNA; its binding is stimulated by other ribosomal proteins, e.g. L4, L17, and L20. It is important during the early stages of 50S assembly. It makes multiple contacts with different domains of the 23S rRNA in the assembled 50S subunit and ribosome. The globular domain of the protein is located near the polypeptide exit tunnel on the outside of the subunit, while an extended beta-hairpin is found that lines the wall of the exit tunnel in the center of the 70S ribosome. This is Large ribosomal subunit protein uL22 from Buchnera aphidicola subsp. Cinara cedri (strain Cc).